A 562-amino-acid chain; its full sequence is Probable malate:quinone oxidoreductase (562 aa).

The disordered stretch occupies residues 530-562; sequence EVPDKSATPPDPTIAPKHQHSPTHNANSEMQAL. Residues 551–562 are compositionally biased toward polar residues; sequence PTHNANSEMQAL.

It belongs to the MQO family. FAD is required as a cofactor.

The catalysed reaction is (S)-malate + a quinone = a quinol + oxaloacetate. It functions in the pathway carbohydrate metabolism; tricarboxylic acid cycle; oxaloacetate from (S)-malate (quinone route): step 1/1. In Xylella fastidiosa (strain 9a5c), this protein is Probable malate:quinone oxidoreductase.